A 155-amino-acid chain; its full sequence is Interleukin-2 (155 aa).

An N-terminal signal peptide occupies residues 1–20 (MYKMQLVACIALSLVLITNS). Thr-23 carries O-linked (GalNAc...) threonine glycosylation. Residues Cys-77 and Cys-125 are joined by a disulfide bond.

Belongs to the IL-2 family.

The protein localises to the secreted. Functionally, cytokine produced by activated CD4-positive helper T-cells and to a lesser extend activated CD8-positive T-cells and natural killer (NK) cells that plays pivotal roles in the immune response and tolerance. Binds to a receptor complex composed of either the high-affinity trimeric IL-2R (IL2RA/CD25, IL2RB/CD122 and IL2RG/CD132) or the low-affinity dimeric IL-2R (IL2RB and IL2RG). Interaction with the receptor leads to oligomerization and conformation changes in the IL-2R subunits resulting in downstream signaling starting with phosphorylation of JAK1 and JAK3. In turn, JAK1 and JAK3 phosphorylate the receptor to form a docking site leading to the phosphorylation of several substrates including STAT5. This process leads to activation of several pathways including STAT, phosphoinositide-3-kinase/PI3K and mitogen-activated protein kinase/MAPK pathways. Functions as a T-cell growth factor and can increase NK-cell cytolytic activity as well. Promotes strong proliferation of activated B-cells and subsequently immunoglobulin production. Plays a pivotal role in regulating the adaptive immune system by controlling the survival and proliferation of regulatory T-cells, which are required for the maintenance of immune tolerance. Moreover, participates in the differentiation and homeostasis of effector T-cell subsets, including Th1, Th2, Th17 as well as memory CD8-positive T-cells. In Dasypus novemcinctus (Nine-banded armadillo), this protein is Interleukin-2 (IL2).